The chain runs to 99 residues: Small ribosomal subunit protein bS20 (99 aa).

This sequence belongs to the bacterial ribosomal protein bS20 family.

Its function is as follows. Binds directly to 16S ribosomal RNA. This is Small ribosomal subunit protein bS20 from Chlamydia pneumoniae (Chlamydophila pneumoniae).